The primary structure comprises 211 residues: Thiamine-phosphate synthase (211 aa).

4-amino-2-methyl-5-(diphosphooxymethyl)pyrimidine is bound by residues 37 to 41 and asparagine 69; that span reads QLRIK. Residues aspartate 70 and aspartate 89 each contribute to the Mg(2+) site. Serine 108 lines the 4-amino-2-methyl-5-(diphosphooxymethyl)pyrimidine pocket. 134–136 lines the 2-[(2R,5Z)-2-carboxy-4-methylthiazol-5(2H)-ylidene]ethyl phosphate pocket; the sequence is TQT. A 4-amino-2-methyl-5-(diphosphooxymethyl)pyrimidine-binding site is contributed by lysine 137. Residues glycine 166 and 186 to 187 contribute to the 2-[(2R,5Z)-2-carboxy-4-methylthiazol-5(2H)-ylidene]ethyl phosphate site; that span reads VS.

The protein belongs to the thiamine-phosphate synthase family. The cofactor is Mg(2+).

The catalysed reaction is 2-[(2R,5Z)-2-carboxy-4-methylthiazol-5(2H)-ylidene]ethyl phosphate + 4-amino-2-methyl-5-(diphosphooxymethyl)pyrimidine + 2 H(+) = thiamine phosphate + CO2 + diphosphate. The enzyme catalyses 2-(2-carboxy-4-methylthiazol-5-yl)ethyl phosphate + 4-amino-2-methyl-5-(diphosphooxymethyl)pyrimidine + 2 H(+) = thiamine phosphate + CO2 + diphosphate. It catalyses the reaction 4-methyl-5-(2-phosphooxyethyl)-thiazole + 4-amino-2-methyl-5-(diphosphooxymethyl)pyrimidine + H(+) = thiamine phosphate + diphosphate. It functions in the pathway cofactor biosynthesis; thiamine diphosphate biosynthesis; thiamine phosphate from 4-amino-2-methyl-5-diphosphomethylpyrimidine and 4-methyl-5-(2-phosphoethyl)-thiazole: step 1/1. In terms of biological role, condenses 4-methyl-5-(beta-hydroxyethyl)thiazole monophosphate (THZ-P) and 2-methyl-4-amino-5-hydroxymethyl pyrimidine pyrophosphate (HMP-PP) to form thiamine monophosphate (TMP). The protein is Thiamine-phosphate synthase of Escherichia coli O9:H4 (strain HS).